Reading from the N-terminus, the 517-residue chain is E3 ubiquitin-protein ligase TRIM65 (517 aa).

A2 is subject to N-acetylalanine. An RING-type zinc finger spans residues 12 to 51 (CAICLGLYQDPVTLPCGHNFCGACIRDWWDRCGKACPECR). The disordered stretch occupies residues 75-94 (AGPARDPGPDPGPGPDPAAR). The segment at 90-137 (DPAARCPRHGRPLELFCRTEGRCVCSVCTVRECRLHERALLDAERLKR) adopts a B box-type zinc-finger fold. Residues C95, H98, C117, and H125 each contribute to the Zn(2+) site. Positions 139–227 (AQLRASLEVT…QRLRVHLEAV (89 aa)) form a coiled coil. A Phosphoserine modification is found at S185. K206 participates in a covalent cross-link: (Microbial infection) Glycyl lysine isopeptide (Lys-Gly) (interchain with G-Cter in ubiquitin). The region spanning 313–506 (APVPSTVCPL…LTLCHQPGAV (194 aa)) is the B30.2/SPRY domain.

It belongs to the TRIM/RBCC family. In terms of assembly, homo-multimerizes. Interacts with ARRDC4.

It localises to the cytoplasm. It catalyses the reaction S-ubiquitinyl-[E2 ubiquitin-conjugating enzyme]-L-cysteine + [acceptor protein]-L-lysine = [E2 ubiquitin-conjugating enzyme]-L-cysteine + N(6)-ubiquitinyl-[acceptor protein]-L-lysine.. It functions in the pathway protein modification; protein ubiquitination. Its function is as follows. E3 ubiquitin ligase that plays a role in several processes including innate immnity, autophagy or inflammation. Negatively regulates miRNAs by modulating the ubiquitination and stability of TNRC6A, a protein involved in RNA-mediated gene silencing by both micro-RNAs (miRNAs) and short interfering RNAs. This ubiquitination results in the suppressed expression of miR-138-5p leading to increased autophagy. Upon enteroviral infection, promotes 'Lys-63'-mediated ubiquitination activation of IFIH1/MDA5 leading to innate signaling cascade. Mechanistically, selectively recognizes MDA5 filaments that occur on dsRNAs. Plays also a role in limitation of inflammation through different mechanisms. First, promotes 'Lys-48'-mediated ubiquitination of VCAM1 leading to its degradation and limitation of LPS-induced lung inflammation. In addition, negatively regulates inflammasome activation by promoting 'lys48'-linked ubiquitination of NLRP3 which is critical for the inhibition of NLRP3 inflammasome activation in resting macrophages. The chain is E3 ubiquitin-protein ligase TRIM65 (TRIM65) from Homo sapiens (Human).